A 100-amino-acid polypeptide reads, in one-letter code: Urease subunit gamma (100 aa).

It belongs to the urease gamma subunit family. Heterotrimer of UreA (gamma), UreB (beta) and UreC (alpha) subunits. Three heterotrimers associate to form the active enzyme.

The protein resides in the cytoplasm. It catalyses the reaction urea + 2 H2O + H(+) = hydrogencarbonate + 2 NH4(+). Its pathway is nitrogen metabolism; urea degradation; CO(2) and NH(3) from urea (urease route): step 1/1. This is Urease subunit gamma from Lysinibacillus sphaericus (strain C3-41).